We begin with the raw amino-acid sequence, 260 residues long: Pyridoxine 5'-phosphate synthase (260 aa).

A 3-amino-2-oxopropyl phosphate-binding site is contributed by asparagine 6. 1-deoxy-D-xylulose 5-phosphate is bound at residue aspartate 8–histidine 9. Arginine 17 serves as a coordination point for 3-amino-2-oxopropyl phosphate. Histidine 42 functions as the Proton acceptor in the catalytic mechanism. 1-deoxy-D-xylulose 5-phosphate contacts are provided by arginine 44 and histidine 49. Glutamate 69 functions as the Proton acceptor in the catalytic mechanism. 1-deoxy-D-xylulose 5-phosphate is bound at residue threonine 99. The active-site Proton donor is the histidine 213. 3-amino-2-oxopropyl phosphate contacts are provided by residues glycine 214 and glycine 235–glutamine 236.

This sequence belongs to the PNP synthase family. As to quaternary structure, homooctamer; tetramer of dimers.

Its subcellular location is the cytoplasm. The catalysed reaction is 3-amino-2-oxopropyl phosphate + 1-deoxy-D-xylulose 5-phosphate = pyridoxine 5'-phosphate + phosphate + 2 H2O + H(+). The protein operates within cofactor biosynthesis; pyridoxine 5'-phosphate biosynthesis; pyridoxine 5'-phosphate from D-erythrose 4-phosphate: step 5/5. In terms of biological role, catalyzes the complicated ring closure reaction between the two acyclic compounds 1-deoxy-D-xylulose-5-phosphate (DXP) and 3-amino-2-oxopropyl phosphate (1-amino-acetone-3-phosphate or AAP) to form pyridoxine 5'-phosphate (PNP) and inorganic phosphate. In Sulfurimonas denitrificans (strain ATCC 33889 / DSM 1251) (Thiomicrospira denitrificans (strain ATCC 33889 / DSM 1251)), this protein is Pyridoxine 5'-phosphate synthase.